We begin with the raw amino-acid sequence, 177 residues long: Actinorhodin polyketide dimerase (177 aa).

To S.pristinaespiralis SnaC.

The protein operates within antibiotic biosynthesis; actinorhodin biosynthesis. In Streptomyces coelicolor (strain ATCC BAA-471 / A3(2) / M145), this protein is Actinorhodin polyketide dimerase (actVB).